The following is a 249-amino-acid chain: Exosome complex component Rrp4 (249 aa).

An S1 motif domain is found at 72-143; that stretch reads GDTIIGLVED…RTISPVLTVK (72 aa). A KH domain is found at 151–213; the sequence is PLGTVMDIMP…EALIEAINII (63 aa).

Belongs to the RRP4 family. As to quaternary structure, component of the archaeal exosome complex. Forms a trimer of Rrp4 and/or Csl4 subunits. The trimer associates with a hexameric ring-like arrangement composed of 3 Rrp41-Rrp42 heterodimers.

It localises to the cytoplasm. Non-catalytic component of the exosome, which is a complex involved in RNA degradation. Increases the RNA binding and the efficiency of RNA degradation. Confers strong poly(A) specificity to the exosome. This Sulfolobus acidocaldarius (strain ATCC 33909 / DSM 639 / JCM 8929 / NBRC 15157 / NCIMB 11770) protein is Exosome complex component Rrp4.